Consider the following 3414-residue polypeptide: Genome polyprotein (3414 aa).

Residues 1 to 27 (MAGKAILKGKGGGPPRRVSKETAKKTR) are disordered. Over 1 to 98 (MAGKAILKGK…LQKRGKRRST (98 aa)) the chain is Cytoplasmic. A propeptide spans 98 to 116 (TTDWTGWLLVAMLLSIALA) (ER anchor for the capsid protein C, removed in mature form by serine protease NS3). The chain crosses the membrane as a helical span at residues 99–119 (TDWTGWLLVAMLLSIALAATV). Residues 120–242 (RKEGDGTTVI…HLTRVEGWVW (123 aa)) are Extracellular-facing. Asn-144 carries an N-linked (GlcNAc...) asparagine; by host glycan. The helical transmembrane segment at 243 to 260 (KNKSLTLAVVVIVWMTVE) threads the bilayer. Position 261 (Ser-261) is a topological domain, cytoplasmic. Residues 262–280 (AVTRIVIVSALLCLAPAYA) traverse the membrane as a helical segment. Residues 281–727 (SRCTHLENRD…HTVLGGAFNS (447 aa)) are Extracellular-facing. 6 cysteine pairs are disulfide-bonded: Cys-283-Cys-310, Cys-340-Cys-396, Cys-340-Cys-401, Cys-354-Cys-385, Cys-372-Cys-396, and Cys-372-Cys-401. The interval 378 to 391 (DRGWGNHCGLFGKG) is fusion peptide. N-linked (GlcNAc...) asparagine; by host glycosylation occurs at Asn-434. Disulfide bonds link Cys-466–Cys-570 and Cys-587–Cys-618. A helical membrane pass occupies residues 728 to 748 (VFGGVGFLPRILLGISLAWLG). At 749–755 (LNMRNPT) the chain is on the cytoplasmic side. Residues 756–776 (MSMSFLLAGGLVLTMTLGVGA) traverse the membrane as a helical segment. The Extracellular portion of the chain corresponds to 777–1132 (DVGCAVDTER…RSMVVADNGE (356 aa)). Intrachain disulfides connect Cys-780–Cys-791, Cys-831–Cys-920, Cys-955–Cys-1000, Cys-1057–Cys-1106, Cys-1068–Cys-1090, and Cys-1089–Cys-1093. N-linked (GlcNAc...) asparagine; by host glycosylation is found at Asn-861, Asn-983, and Asn-999. The chain crosses the membrane as a helical span at residues 1133-1153 (LLSEGGIPGIVAVFVVLEYII). Residues 1154–1158 (RKRPS) are Cytoplasmic-facing. The helical transmembrane segment at 1159–1179 (AGLTVVWGGVVVLALLVTGMV) threads the bilayer. At 1180-1187 (TLQSMLRY) the chain is on the lumenal side. Residues 1188–1208 (VIAVGVTFHLELGPEIVALML) traverse the membrane as a helical segment. The Cytoplasmic portion of the chain corresponds to 1209 to 1236 (LQAVFELRVGLLGAFVLRRSLTTREVVT). Residues 1237 to 1257 (IYFLLLVLELGLPSANLEALW) form a helical membrane-spanning segment. The Lumenal segment spans residues 1258 to 1293 (GWADALAMGAMIFRACTAEGKTGLGLLLVALMTQQN). Residues 1294–1314 (AVIVHQGLVIFLSVASACSVW) form a helical membrane-spanning segment. The Cytoplasmic segment spans residues 1315–1363 (KLLRGQREQKGLSWIVPLAGRLGGKGSGIRLLAFWELASRRDRRSFSEP). The chain crosses the membrane as a helical span at residues 1364–1381 (LTVVGVMLTLASGMMRHT). A topological domain (lumenal) is located at residue Ser-1382. Residues 1383–1403 (QEALCALAAASFLLLMLVLGT) traverse the membrane as a helical segment. Residues 1404-1454 (RKMQLVAEWSGCVEWHPDLADEGGEISLRVRQDALGNFHLTELEKEERMMA) lie on the Cytoplasmic side of the membrane. The interval 1410–1449 (AEWSGCVEWHPDLADEGGEISLRVRQDALGNFHLTELEKE) is interacts with and activates NS3 protease. The segment at residues 1455 to 1475 (FWLLAGLTASALHWTGILVVM) is an intramembrane region (helical). At 1476 to 2160 (GLWTMSEMLR…KMAERDAPEA (685 aa)) the chain is on the cytoplasmic side. The 180-residue stretch at 1490-1669 (SDLVFSGQSG…EVEKSRPNLP (180 aa)) folds into the Peptidase S7 domain. Residues His-1543, Asp-1567, and Ser-1627 each act as charge relay system; for serine protease NS3 activity in the active site. In terms of domain architecture, Helicase ATP-binding spans 1675–1831 (TGWTSKGTIT…ESNGAITSEE (157 aa)). 1688–1695 (MHPGSGKT) contacts ATP. The DEAH box signature appears at 1779–1782 (DEAH). Residues 1841-2000 (DGFDWITEYE…TLRGPVATFY (160 aa)) enclose the Helicase C-terminal domain. Residue Lys-1883 is modified to N6-acetyllysine; by host. A helical transmembrane segment spans residues 2161–2181 (FLTMVEMVVLGLATLGAVWCL). Residues 2182–2189 (VLRTSISR) lie on the Lumenal side of the membrane. Positions 2190 to 2210 (MMLGTMVLLVSLALLWAGGVG) form an intramembrane region, helical. Position 2211 (Tyr-2211) is a topological domain, lumenal. Residues 2212–2232 (GSMAGVALVFYTLLTVLQPEA) traverse the membrane as a helical segment. Topologically, residues 2233–2244 (GKQRSSDDNKLA) are cytoplasmic. A helical transmembrane segment spans residues 2245–2265 (YFLLTLCSLAGLVAANEMGFL). Residues 2266-2299 (EKTKADLSAVLWSEREEPRVWSEWTNIDIQPAKS) lie on the Lumenal side of the membrane. Positions 2300–2320 (WGTYVLVVSLFTPYIIHQLQT) form an intramembrane region, helical. Topologically, residues 2321-2343 (RIQQLVNSAVASGAQAMRDLGGG) are lumenal. An intramembrane region (helical) is located at residues 2344–2364 (TPFFGVAGHVLTLGVVSLVGA). At 2365 to 2368 (TPTS) the chain is on the lumenal side. Residues 2369–2389 (LVVGVGLAAFHLAIVVSGLEA) traverse the membrane as a helical segment. Residues 2390-2432 (ELTQRAHKVFFSAMVRNPMVDGDVINPFGDGEVKPALYERKMS) lie on the Cytoplasmic side of the membrane. The chain crosses the membrane as a helical span at residues 2433 to 2453 (LILAMILCFMSVVLNRTVPAV). Residues 2454–2477 (TEASAVGLAAAGQLIRPEADTLWT) lie on the Lumenal side of the membrane. Residues 2478–2498 (MPVACGLSGVVRGSLWGFLPL) form a helical membrane-spanning segment. At 2499-3414 (GHRLWLRTSG…WELKVESSII (916 aa)) the chain is on the cytoplasmic side. In terms of domain architecture, mRNA cap 0-1 NS5-type MT spans 2512 to 2776 (GGSEGDTLGD…EMDLGVGTRC (265 aa)). Ser-2567 is a binding site for S-adenosyl-L-methionine. Ser-2567 carries the post-translational modification Phosphoserine. Catalysis depends on Lys-2572, which acts as the For 2'-O-MTase activity. S-adenosyl-L-methionine-binding residues include Gly-2597, Trp-2598, Thr-2615, Ile-2616, and Val-2643. Asp-2657 acts as the For 2'-O-MTase activity in catalysis. Ile-2658 is a binding site for S-adenosyl-L-methionine. Catalysis depends on for 2'-O-MTase activity residues Lys-2694 and Glu-2730. The interval 2730 to 2734 (EMYYS) is interaction with host SCRIB. Residue Tyr-2732 coordinates S-adenosyl-L-methionine. Glu-2950, His-2954, Cys-2959, and Cys-2962 together coordinate Zn(2+). The RdRp catalytic domain maps to 3040–3189 (GLFYADDTAG…RPIDDRFSKA (150 aa)). The Zn(2+) site is built by His-3224, Cys-3240, and Cys-3359.

In the N-terminal section; belongs to the class I-like SAM-binding methyltransferase superfamily. mRNA cap 0-1 NS5-type methyltransferase family. Homodimer. As to quaternary structure, forms heterodimers with envelope protein E in the endoplasmic reticulum and Golgi. In terms of assembly, homodimer; in the endoplasmic reticulum and Golgi. Forms homodimers as well as homohexamers. NS1 may interact with NS4A. As to quaternary structure, forms a heterodimer with serine protease NS3. May form homooligomers. In terms of assembly, forms a heterodimer with NS2B. Interacts with NS4B. Interacts with unphosphorylated RNA-directed RNA polymerase NS5; this interaction stimulates RNA-directed RNA polymerase NS5 guanylyltransferase activity. Interacts with serine protease NS3. As to quaternary structure, interacts with host STAT2; this interaction inhibits the phosphorylation of the latter, and, when all viral proteins are present (polyprotein), targets STAT2 for degradation. Specific enzymatic cleavages in vivo yield mature proteins. Cleavages in the lumen of endoplasmic reticulum are performed by host signal peptidase, whereas cleavages in the cytoplasmic side are performed by serine protease NS3. Signal cleavage at the 2K-4B site requires a prior NS3 protease-mediated cleavage at the 4A-2K site. Post-translationally, cleaved in post-Golgi vesicles by a host furin, releasing the mature small envelope protein M, and peptide pr. This cleavage is incomplete as up to 30% of viral particles still carry uncleaved prM. In terms of processing, N-glycosylated. N-glycosylated. The excreted form is glycosylated and this is required for efficient secretion of the protein from infected cells. Post-translationally, acetylated by host KAT5. Acetylation modulates NS3 RNA-binding and unwinding activities and plays an important positive role for viral replication. In terms of processing, phosphorylated on serines residues. This phosphorylation may trigger NS5 nuclear localization.

It localises to the virion. The protein resides in the host nucleus. The protein localises to the host cytoplasm. Its subcellular location is the host perinuclear region. It is found in the secreted. It localises to the virion membrane. The protein resides in the host endoplasmic reticulum membrane. It carries out the reaction Selective hydrolysis of -Xaa-Xaa-|-Yaa- bonds in which each of the Xaa can be either Arg or Lys and Yaa can be either Ser or Ala.. It catalyses the reaction RNA(n) + a ribonucleoside 5'-triphosphate = RNA(n+1) + diphosphate. The enzyme catalyses a ribonucleoside 5'-triphosphate + H2O = a ribonucleoside 5'-diphosphate + phosphate + H(+). The catalysed reaction is ATP + H2O = ADP + phosphate + H(+). It carries out the reaction a 5'-end (5'-triphosphoguanosine)-ribonucleoside in mRNA + S-adenosyl-L-methionine = a 5'-end (N(7)-methyl 5'-triphosphoguanosine)-ribonucleoside in mRNA + S-adenosyl-L-homocysteine. It catalyses the reaction a 5'-end (N(7)-methyl 5'-triphosphoguanosine)-ribonucleoside in mRNA + S-adenosyl-L-methionine = a 5'-end (N(7)-methyl 5'-triphosphoguanosine)-(2'-O-methyl-ribonucleoside) in mRNA + S-adenosyl-L-homocysteine + H(+). Its function is as follows. Plays a role in virus budding by binding to the cell membrane and gathering the viral RNA into a nucleocapsid that forms the core of a mature virus particle. During virus entry, may induce genome penetration into the host cytoplasm after hemifusion induced by the surface proteins. Can migrate to the cell nucleus where it modulates host functions. Functionally, inhibits RNA silencing by interfering with host Dicer. Prevents premature fusion activity of envelope proteins in trans-Golgi by binding to envelope protein E at pH6.0. After virion release in extracellular space, gets dissociated from E dimers. In terms of biological role, acts as a chaperone for envelope protein E during intracellular virion assembly by masking and inactivating envelope protein E fusion peptide. prM is the only viral peptide matured by host furin in the trans-Golgi network probably to avoid catastrophic activation of the viral fusion activity in acidic Golgi compartment prior to virion release. prM-E cleavage is inefficient, and many virions are only partially matured. These uncleaved prM would play a role in immune evasion. Its function is as follows. May play a role in virus budding. Exerts cytotoxic effects by activating a mitochondrial apoptotic pathway through M ectodomain. May display a viroporin activity. Functionally, binds to host cell surface receptor and mediates fusion between viral and cellular membranes. Envelope protein is synthesized in the endoplasmic reticulum in the form of heterodimer with protein prM. They play a role in virion budding in the ER, and the newly formed immature particle is covered with 60 spikes composed of heterodimer between precursor prM and envelope protein E. The virion is transported to the Golgi apparatus where the low pH causes dissociation of PrM-E heterodimers and formation of E homodimers. prM-E cleavage is inefficient, and many virions are only partially matured. These uncleaved prM would play a role in immune evasion. Involved in immune evasion, pathogenesis and viral replication. Once cleaved off the polyprotein, is targeted to three destinations: the viral replication cycle, the plasma membrane and the extracellular compartment. Essential for viral replication. Required for formation of the replication complex and recruitment of other non-structural proteins to the ER-derived membrane structures. Excreted as a hexameric lipoparticle that plays a role against host immune response. Antagonizing the complement function. Binds to the host macrophages and dendritic cells. Inhibits signal transduction originating from Toll-like receptor 3 (TLR3). In terms of biological role, component of the viral RNA replication complex that functions in virion assembly and antagonizes the host immune response. Its function is as follows. Required cofactor for the serine protease function of NS3. May have membrane-destabilizing activity and form viroporins. Functionally, displays three enzymatic activities: serine protease, NTPase and RNA helicase. NS3 serine protease, in association with NS2B, performs its autocleavage and cleaves the polyprotein at dibasic sites in the cytoplasm: C-prM, NS2A-NS2B, NS2B-NS3, NS3-NS4A, NS4A-2K and NS4B-NS5. NS3 RNA helicase binds RNA and unwinds dsRNA in the 3' to 5' direction. Regulates the ATPase activity of the NS3 helicase activity. NS4A allows NS3 helicase to conserve energy during unwinding. In terms of biological role, functions as a signal peptide for NS4B and is required for the interferon antagonism activity of the latter. Its function is as follows. Induces the formation of ER-derived membrane vesicles where the viral replication takes place. Inhibits interferon (IFN)-induced host STAT1 phosphorylation and nuclear translocation, thereby preventing the establishment of cellular antiviral state by blocking the IFN-alpha/beta pathway. Inhibits STAT2 translocation in the nucleus after IFN-alpha treatment. Functionally, replicates the viral (+) and (-) RNA genome, and performs the capping of genomes in the cytoplasm. NS5 methylates viral RNA cap at guanine N-7 and ribose 2'-O positions. Besides its role in RNA genome replication, also prevents the establishment of cellular antiviral state by blocking the interferon-alpha/beta (IFN-alpha/beta) signaling pathway. Inhibits host TYK2 and STAT2 phosphorylation, thereby preventing activation of JAK-STAT signaling pathway. The sequence is that of Genome polyprotein from Homo sapiens (Human).